Reading from the N-terminus, the 628-residue chain is Junctophilin-4 (628 aa).

Over 1 to 606 (MSPGGKFDFD…RPAQPGAANP (606 aa)) the chain is Cytoplasmic. 6 MORN repeats span residues 50–72 (LGVF…KREG), 74–95 (GVER…KGRS), 96–117 (GVWE…FQDG), 118–140 (YGTE…KRHG), 141–163 (YGVR…RTSL), and 164–186 (DSGH…EGGS). Disordered regions lie at residues 158–214 (PRRT…RTPA) and 231–276 (GGRR…LIEG). A compositionally biased stretch (pro residues) spans 170–179 (PPTPPPPLPL). Low complexity-rich tracts occupy residues 231 to 241 (GGRRSSLGSKR) and 253 to 272 (GSTG…APPA). 2 MORN repeats span residues 317–339 (YGRT…RLVH) and 340–362 (GGRV…KVDR). Residues 415–602 (DLQPMLEAPG…AATERPAQPG (188 aa)) form a disordered region. Acidic residues predominate over residues 432-443 (EGSDTEPLDEDS). Low complexity-rich tracts occupy residues 453-467 (PSEG…PASS) and 528-541 (GSPL…SSGS). A helical; Anchor for type IV membrane protein transmembrane segment spans residues 607–628 (LVVGAVALLDLSLAFLFSQLLT).

The protein belongs to the junctophilin family.

It localises to the cell membrane. The protein resides in the endoplasmic reticulum membrane. In terms of biological role, junctophilins contribute to the formation of junctional membrane complexes (JMCs) which link the plasma membrane with the endoplasmic or sarcoplasmic reticulum in excitable cells. Provides a structural foundation for functional cross-talk between the cell surface and intracellular calcium release channels. JPH4 is brain-specific and appears to have an active role in certain neurons involved in motor coordination and memory. This is Junctophilin-4 (JPH4) from Homo sapiens (Human).